Here is a 656-residue protein sequence, read N- to C-terminus: MTDPLIPAVLVFRDNGTPFSPLYDDIYHSAVGGLEQARYVFLRGNSLPDRWQGRRIFTVLETGFGMGINFLMTWAAWRADPLRCERLHFVSTEKHPFTVGDLRKAVAATISDPEIAALAQALANAWPTLVPGTHRLEFDEGRVVLTLVFGDAQERLPALRLRADAFYLDGFAPARNPELWTPMIFKALARLAGEGATFATCSSAGDIKRALIQCGFEYRKVDGFGWKRAMLVGHFAPRWRVRRHEPPAPLAVDERHAVVIGAGLAGCAVIERLAARGWRVTSLERHASVAQEASGNPAGVFHPMISRDDSIASRVTRAGFLYTLRRWAALERLGHAPLRGGQGLLQIAADENEARSISEAIAAFGYPGDYVTPVSAAEAQRLAGMPLARGGWFFPHGGWIDPASLCAAQCAAAGPLLERRFGVDVARIERSGGQWTVFDTSGEAIARAPVVIVASAHDAARIAGLQHAPTRSIRGQLTLLPPGAVLPPLQMPVIGEGYAVPLADGVTLTGATYELDDPDTSLRADGHLENLERVAQMLPAFANVADPARSTALTGRVAFRCVTSDRMPMIGQLADEAQAALDAQRLRGAWPLDLPRTDGLYGAFAYGSRGLVWAALGAELIASQLEGEPWPLERDLAEDIDPARFLLRALRQGAVS.

The segment at 1–236 is tRNA (mnm(5)s(2)U34)-methyltransferase; the sequence is MTDPLIPAVL…KRAMLVGHFA (236 aa). Residues 260-656 form an FAD-dependent cmnm(5)s(2)U34 oxidoreductase region; that stretch reads IGAGLAGCAV…LRALRQGAVS (397 aa).

It in the N-terminal section; belongs to the methyltransferase superfamily. tRNA (mnm(5)s(2)U34)-methyltransferase family. In the C-terminal section; belongs to the DAO family. Requires FAD as cofactor.

Its subcellular location is the cytoplasm. It carries out the reaction 5-aminomethyl-2-thiouridine(34) in tRNA + S-adenosyl-L-methionine = 5-methylaminomethyl-2-thiouridine(34) in tRNA + S-adenosyl-L-homocysteine + H(+). Catalyzes the last two steps in the biosynthesis of 5-methylaminomethyl-2-thiouridine (mnm(5)s(2)U) at the wobble position (U34) in tRNA. Catalyzes the FAD-dependent demodification of cmnm(5)s(2)U34 to nm(5)s(2)U34, followed by the transfer of a methyl group from S-adenosyl-L-methionine to nm(5)s(2)U34, to form mnm(5)s(2)U34. This is tRNA 5-methylaminomethyl-2-thiouridine biosynthesis bifunctional protein MnmC from Paraburkholderia phytofirmans (strain DSM 17436 / LMG 22146 / PsJN) (Burkholderia phytofirmans).